Here is an 865-residue protein sequence, read N- to C-terminus: Alanine--tRNA ligase (865 aa).

Positions 554, 558, 656, and 660 each coordinate Zn(2+).

This sequence belongs to the class-II aminoacyl-tRNA synthetase family. Zn(2+) serves as cofactor.

It localises to the cytoplasm. The catalysed reaction is tRNA(Ala) + L-alanine + ATP = L-alanyl-tRNA(Ala) + AMP + diphosphate. Its function is as follows. Catalyzes the attachment of alanine to tRNA(Ala) in a two-step reaction: alanine is first activated by ATP to form Ala-AMP and then transferred to the acceptor end of tRNA(Ala). Also edits incorrectly charged Ser-tRNA(Ala) and Gly-tRNA(Ala) via its editing domain. The protein is Alanine--tRNA ligase of Francisella tularensis subsp. tularensis (strain FSC 198).